The sequence spans 657 residues: Iron-sulfur cluster biogenesis chaperone, mitochondrial (657 aa).

The protein belongs to the heat shock protein 70 family. In terms of assembly, interacts with the Fe/S cluster assembly proteins ISU1, MGE1, GRX5 and JAC1.

It localises to the mitochondrion matrix. It carries out the reaction ATP + H2O = ADP + phosphate + H(+). Functionally, required for the assembly of iron-sulfur (Fe/S) clusters in mitochondria. Assisted by the DnaJ-like co-chaperone JAC1 and the nucleotide exchange factor MGE1, it mediates ATP-dependent Fe-S cluster transfer from the scaffold proteins ISU1/ISU2 to GRX5. In Saccharomyces cerevisiae (strain ATCC 204508 / S288c) (Baker's yeast), this protein is Iron-sulfur cluster biogenesis chaperone, mitochondrial.